The following is an 807-amino-acid chain: Phenylalanine--tRNA ligase beta subunit (807 aa).

The 118-residue stretch at 39 to 156 (AGEFSGVVIG…SDAPLGQCVR (118 aa)) folds into the tRNA-binding domain. The B5 domain occupies 409 to 488 (PQTKDVNLRR…RIFGYNNIPN (80 aa)). Mg(2+)-binding residues include Asp466, Asp472, Glu475, and Glu476. The 94-residue stretch at 713–806 (SRFPANRRDL…LKTELNASLR (94 aa)) folds into the FDX-ACB domain.

It belongs to the phenylalanyl-tRNA synthetase beta subunit family. Type 1 subfamily. Tetramer of two alpha and two beta subunits. Requires Mg(2+) as cofactor.

Its subcellular location is the cytoplasm. The enzyme catalyses tRNA(Phe) + L-phenylalanine + ATP = L-phenylalanyl-tRNA(Phe) + AMP + diphosphate + H(+). The sequence is that of Phenylalanine--tRNA ligase beta subunit from Colwellia psychrerythraea (strain 34H / ATCC BAA-681) (Vibrio psychroerythus).